The following is a 214-amino-acid chain: Cytochrome c biogenesis ATP-binding export protein CcmA (214 aa).

Positions 12 to 214 (LAARALAFSR…TRMLTLEAAA (203 aa)) constitute an ABC transporter domain. 44–51 (GDNGAGKT) is an ATP binding site.

This sequence belongs to the ABC transporter superfamily. CcmA exporter (TC 3.A.1.107) family. The complex is composed of two ATP-binding proteins (CcmA) and two transmembrane proteins (CcmB).

It localises to the cell inner membrane. It catalyses the reaction heme b(in) + ATP + H2O = heme b(out) + ADP + phosphate + H(+). In terms of biological role, part of the ABC transporter complex CcmAB involved in the biogenesis of c-type cytochromes; once thought to export heme, this seems not to be the case, but its exact role is uncertain. Responsible for energy coupling to the transport system. The chain is Cytochrome c biogenesis ATP-binding export protein CcmA from Xanthomonas campestris pv. campestris (strain 8004).